The following is a 229-amino-acid chain: Ribosome maturation factor RimM (229 aa).

One can recognise a PRC barrel domain in the interval 148 to 229 (ADEFYWVDLI…RVVVDWEADY (82 aa)).

It belongs to the RimM family. As to quaternary structure, binds ribosomal protein uS19.

It localises to the cytoplasm. In terms of biological role, an accessory protein needed during the final step in the assembly of 30S ribosomal subunit, possibly for assembly of the head region. Essential for efficient processing of 16S rRNA. May be needed both before and after RbfA during the maturation of 16S rRNA. It has affinity for free ribosomal 30S subunits but not for 70S ribosomes. The polypeptide is Ribosome maturation factor RimM (Burkholderia pseudomallei (strain 1710b)).